Consider the following 351-residue polypeptide: Fe-S cluster assembly protein DRE2 (351 aa).

The segment at 1–151 (MATTGRVLLL…KPDIGAQQAI (151 aa)) is N-terminal SAM-like domain. Disordered stretches follow at residues 93-118 (RNRE…RYND) and 157-186 (RRRK…PSSN). 2 stretches are compositionally biased toward polar residues: residues 105 to 114 (GNGSNANSSR) and 167 to 186 (TLAS…PSSN). Residues 152 to 243 (PLKLSRRRKE…EDELLDEDDM (92 aa)) form a linker region. The [2Fe-2S] cluster site is built by C253, C264, C267, and C269. The segment at 253–269 (CRPKPGKRRRACKDCSC) is fe-S binding site A. Residues C314, C317, C325, and C328 each coordinate [4Fe-4S] cluster. 2 short sequence motifs (cx2C motif) span residues 314-317 (CGNC) and 325-328 (CDGC). The fe-S binding site B stretch occupies residues 314 to 328 (CGNCSLGDAFRCDGC).

The protein belongs to the anamorsin family. Monomer. Interacts with TAH18. Interacts with MIA40. It depends on [2Fe-2S] cluster as a cofactor. [4Fe-4S] cluster is required as a cofactor.

The protein localises to the cytoplasm. It localises to the mitochondrion intermembrane space. Component of the cytosolic iron-sulfur (Fe-S) protein assembly (CIA) machinery required for the maturation of extramitochondrial Fe-S proteins. Part of an electron transfer chain functioning in an early step of cytosolic Fe-S biogenesis, facilitating the de novo assembly of a [4Fe-4S] cluster on the scaffold complex CFD1-NBP35. Electrons are transferred to DRE2 from NADPH via the FAD- and FMN-containing protein TAH18. TAH18-DRE2 are also required for the assembly of the diferric tyrosyl radical cofactor of ribonucleotide reductase (RNR), probably by providing electrons for reduction during radical cofactor maturation in the catalytic small subunit RNR2. The polypeptide is Fe-S cluster assembly protein DRE2 (Ajellomyces capsulatus (strain NAm1 / WU24) (Darling's disease fungus)).